We begin with the raw amino-acid sequence, 350 residues long: UDP-3-O-acylglucosamine N-acyltransferase (350 aa).

Catalysis depends on H244, which acts as the Proton acceptor.

It belongs to the transferase hexapeptide repeat family. LpxD subfamily. Homotrimer.

The catalysed reaction is a UDP-3-O-[(3R)-3-hydroxyacyl]-alpha-D-glucosamine + a (3R)-hydroxyacyl-[ACP] = a UDP-2-N,3-O-bis[(3R)-3-hydroxyacyl]-alpha-D-glucosamine + holo-[ACP] + H(+). It functions in the pathway bacterial outer membrane biogenesis; LPS lipid A biosynthesis. Catalyzes the N-acylation of UDP-3-O-acylglucosamine using 3-hydroxyacyl-ACP as the acyl donor. Is involved in the biosynthesis of lipid A, a phosphorylated glycolipid that anchors the lipopolysaccharide to the outer membrane of the cell. The sequence is that of UDP-3-O-acylglucosamine N-acyltransferase from Herminiimonas arsenicoxydans.